A 779-amino-acid chain; its full sequence is Glutathione biosynthesis bifunctional protein GshAB (779 aa).

The interval 1–346 (MAFSKNILDS…ETANRNQEQA (346 aa)) is glutamate--cysteine ligase. Residues 512–768 (KKILDQAGIN…LDDKILDALG (257 aa)) form the ATP-grasp domain. Position 539–597 (539–597 (PYYRGRAIVIKPKSTNFGIGITIIKENNRHDFFAQGIAQAFKHEATVLIENFSSGKEYR)) interacts with ATP. Asp719, Glu738, and Asn740 together coordinate Mg(2+). The Mn(2+) site is built by Asp719, Glu738, and Asn740.

In the N-terminal section; belongs to the glutamate--cysteine ligase type 1 family. Type 2 subfamily. Monomer. It depends on Mg(2+) as a cofactor. Mn(2+) is required as a cofactor.

It catalyses the reaction L-cysteine + L-glutamate + ATP = gamma-L-glutamyl-L-cysteine + ADP + phosphate + H(+). The catalysed reaction is gamma-L-glutamyl-L-cysteine + glycine + ATP = glutathione + ADP + phosphate + H(+). It participates in sulfur metabolism; glutathione biosynthesis; glutathione from L-cysteine and L-glutamate: step 1/2. It functions in the pathway sulfur metabolism; glutathione biosynthesis; glutathione from L-cysteine and L-glutamate: step 2/2. Synthesizes glutathione from L-glutamate and L-cysteine via gamma-L-glutamyl-L-cysteine. The sequence is that of Glutathione biosynthesis bifunctional protein GshAB from Desulfotalea psychrophila (strain LSv54 / DSM 12343).